We begin with the raw amino-acid sequence, 193 residues long: Ribosome maturation factor RimM (193 aa).

A PRC barrel domain is found at 112-193 (VDEYYWIDLI…CITVDWGLDF (82 aa)).

Belongs to the RimM family. As to quaternary structure, binds ribosomal protein uS19.

The protein localises to the cytoplasm. An accessory protein needed during the final step in the assembly of 30S ribosomal subunit, possibly for assembly of the head region. Essential for efficient processing of 16S rRNA. May be needed both before and after RbfA during the maturation of 16S rRNA. It has affinity for free ribosomal 30S subunits but not for 70S ribosomes. This is Ribosome maturation factor RimM from Methylibium petroleiphilum (strain ATCC BAA-1232 / LMG 22953 / PM1).